The chain runs to 298 residues: Cyclic dof factor 1 (298 aa).

The interval 27-46 (EEEEKNQNKTLTDQSEKDKT) is disordered. The Dof-type zinc-finger motif lies at 54-108 (LPCPRCNSMETKFCYYNNYNVNQPRHFCKACQRYWTSGGTMRSVPIGAGRRKNKN). The Zn(2+) site is built by C56, C59, C81, and C84. The segment at 200–231 (SSSPTSTLGKHSRDEDETVKQKQRNGSVLVPK) is disordered. Residues 210 to 219 (HSRDEDETVK) are compositionally biased toward basic and acidic residues.

Interacts with ADO2 (via kelch repeats), ADO3 (via kelch repeats) and GI (via N-terminus). In terms of processing, ubiquitinated. In terms of tissue distribution, expressed in the vascular tissues of cotyledons, leaves and hypocotyls and in stomata. Not detected in roots.

It is found in the nucleus. Functionally, transcription factor that binds specifically to a 5'-AA[AG]G-3' consensus core sequence. A flanking TGT sequence contributes to the specificity of binding. Regulates a photoperiodic flowering response. Transcriptional repressor of 'CONSTANS' expression. The DNA-binding ability is not modulated by 'GIGANTEA' but the stability of CDF1 is controlled by the proteasome-dependent pathway. Ubiquitinated by the SCF(ADO3) E3 ubiquitin ligase complex. Binds to the FT promoter in the morning. The protein is Cyclic dof factor 1 (CDF1) of Arabidopsis thaliana (Mouse-ear cress).